The following is a 498-amino-acid chain: MPQRPEAARAGPVAGPDAASKPAPGPALTLRGAGRAYGPVRALRPLTLEIRRGERVALLGPSGAGKSTLLRLLDTSLAPSEGTVEVLGQPVADTDARRLRALRARIGTVHQQLLLVPQATAMQNVVAGRLGRTSLARTLAALVSRREAARVRAVLDEVGIGDKIFERVDRLSGGEQQRVAIARTLYQDPELILADEPLASVDPARAADIAALLARAFAGRTLVVSTHRIEPLLAHVDRVVALREGALAFDKPAAALTLRDLGELYEARRGAADPARAPAARPPSDPVVAPGGTLRIGASSTPGEHLLPSIVRAFARAYPGTRVSLSLSDSAAVTAAVRDGALDLGFVGARDDDPALAYEDVARDEIVLVAAPVLELPPEPITLEVAARLPRVDREPGSGTRAVVEQHLANMGAALDPAAVVLEAGALVALKAAVVSGMGVAFVSRRAVEDDLRGGHVRTVRVEGLSIPRHVFAVLRRSPVPSAAARAFLEVARAEVPP.

A disordered region spans residues 1–27 (MPQRPEAARAGPVAGPDAASKPAPGPA). Positions 28–269 (LTLRGAGRAY…DLGELYEARR (242 aa)) constitute an ABC transporter domain. Residue 60–67 (GPSGAGKS) participates in ATP binding. A lysR substrate binding domain region spans residues 270-498 (GAADPARAPA…LEVARAEVPP (229 aa)).

Belongs to the ABC transporter superfamily. Phosphonates importer (TC 3.A.1.9.1) family. In terms of assembly, the complex is composed of two ATP-binding proteins (PhnC), two transmembrane proteins (PhnE) and a solute-binding protein (PhnD).

It is found in the cell inner membrane. The enzyme catalyses phosphonate(out) + ATP + H2O = phosphonate(in) + ADP + phosphate + H(+). Its function is as follows. Part of the ABC transporter complex PhnCDE involved in phosphonates import. Responsible for energy coupling to the transport system. The polypeptide is Phosphonates import ATP-binding protein PhnC (Anaeromyxobacter dehalogenans (strain 2CP-C)).